We begin with the raw amino-acid sequence, 139 residues long: Large ribosomal subunit protein uL16c (139 aa).

This sequence belongs to the universal ribosomal protein uL16 family. Part of the 50S ribosomal subunit.

It is found in the plastid. It localises to the chloroplast. In Cicer arietinum (Chickpea), this protein is Large ribosomal subunit protein uL16c.